A 461-amino-acid polypeptide reads, in one-letter code: Probable metabolite transport protein CsbC (461 aa).

At Met-1–Gly-14 the chain is on the cytoplasmic side. Residues Ala-15–Ile-35 form a helical membrane-spanning segment. The Extracellular segment spans residues Asn-36–Asp-38. A helical membrane pass occupies residues Ile-39–Phe-59. The Cytoplasmic portion of the chain corresponds to Gly-60 to Val-76. Residues Val-77–Ile-97 traverse the membrane as a helical segment. Residues Gly-98–Arg-104 are Extracellular-facing. A helical membrane pass occupies residues Val-105–Met-125. The Cytoplasmic segment spans residues Ala-126–Asn-139. A helical transmembrane segment spans residues Leu-140 to Glu-160. Residues Ala-161 to Arg-163 lie on the Extracellular side of the membrane. Residues Trp-164 to Pro-184 form a helical membrane-spanning segment. Over Glu-185–Pro-241 the chain is Cytoplasmic. A helical transmembrane segment spans residues Met-242–Ile-262. Residues Tyr-263–Ala-280 lie on the Extracellular side of the membrane. The chain crosses the membrane as a helical span at residues Leu-281–Ile-301. At Asp-302–Lys-308 the chain is on the cytoplasmic side. The chain crosses the membrane as a helical span at residues Leu-309 to Leu-329. Residues Thr-330–Thr-341 lie on the Extracellular side of the membrane. Residues Val-342–Val-362 traverse the membrane as a helical segment. The Cytoplasmic segment spans residues Leu-363–Gly-378. A helical transmembrane segment spans residues Phe-379 to Leu-399. The Extracellular portion of the chain corresponds to Ser-400–Met-402. A helical transmembrane segment spans residues Gly-403–Phe-423. At Tyr-424–Leu-461 the chain is on the cytoplasmic side.

Belongs to the major facilitator superfamily. Sugar transporter (TC 2.A.1.1) family.

The protein resides in the cell membrane. Functionally, could serve either a nutritional or an osmotic protection function. This is Probable metabolite transport protein CsbC (csbC) from Bacillus subtilis (strain 168).